Here is a 223-residue protein sequence, read N- to C-terminus: All-trans retinoic acid-induced differentiation factor (223 aa).

Positions 1–25 are cleaved as a signal peptide; sequence MASRESGGSRAAALLLVLGVERALA. The Extracellular segment spans residues 26–193; sequence LPEICTLCPG…YKCMRQGSFS (168 aa). One can recognise an EGF-like domain in the interval 146–187; that stretch reads QRDLCNSTGSPEMCPENGSCASDGPGLLQCVCADGFHGYKCM. Cystine bridges form between Cys150/Cys165, Cys159/Cys175, and Cys177/Cys186. The chain crosses the membrane as a helical span at residues 194 to 214; it reads LLMFFGILGSTTLAISILLWG. Over 215-223 the chain is Cytoplasmic; sequence TQRRKAKAS.

Interacts with NELL1; the interaction promotes osteoblastic differentiation and mineralization. Interacts with SLC37A3; the interaction is direct and both proteins are mutually dependent for their stability.

It localises to the nucleus envelope. Its subcellular location is the cell membrane. It is found in the lysosome membrane. Its function is as follows. Promotes osteoblast cell differentiation and terminal mineralization. Plays a role in inducing the cell cycle arrest via inhibiting CCND1 expression in all-trans-retinoic acid (ATRA) signal pathway. In osteoclasts, forms a transporter complex with ATRAID for nitrogen-containing-bisphophonates (N-BPs) required for releasing N-BP molecules that have trafficked to lysosomes through fluid-phase endocytosis into the cytosol. This chain is All-trans retinoic acid-induced differentiation factor (Atraid), found in Mus musculus (Mouse).